Consider the following 295-residue polypeptide: Nitrogenase iron protein 1 (295 aa).

12-19 (GKGGIGKS) is a binding site for ATP. Cysteine 100 lines the [4Fe-4S] cluster pocket. ADP-ribosylarginine; by dinitrogenase reductase ADP-ribosyltransferase is present on arginine 103. Cysteine 134 contributes to the [4Fe-4S] cluster binding site.

This sequence belongs to the NifH/BchL/ChlL family. In terms of assembly, homodimer. [4Fe-4S] cluster serves as cofactor. Post-translationally, the reversible ADP-ribosylation of Arg-103 inactivates the nitrogenase reductase and regulates nitrogenase activity.

The catalysed reaction is N2 + 8 reduced [2Fe-2S]-[ferredoxin] + 16 ATP + 16 H2O = H2 + 8 oxidized [2Fe-2S]-[ferredoxin] + 2 NH4(+) + 16 ADP + 16 phosphate + 6 H(+). In terms of biological role, the key enzymatic reactions in nitrogen fixation are catalyzed by the nitrogenase complex, which has 2 components: the iron protein and the molybdenum-iron protein. This is Nitrogenase iron protein 1 (nifH1) from Mastigocladus laminosus (Fischerella sp.).